Here is a 106-residue protein sequence, read N- to C-terminus: Neisseria hypothetical transcription factor (106 aa).

The 55-residue stretch at 26-80 (MRLFRVNKGWSQEELARQCGLDRTYVSAVERKRWNIALSNIEKMAAALGVAAYQL) folds into the HTH cro/C1-type domain. The H-T-H motif DNA-binding region spans 37–56 (QEELARQCGLDRTYVSAVER).

In terms of assembly, homodimer. Can interact with the dimeric form of the DNA mimic protein DMP19 with 1:1 stoichiometry.

It localises to the cytoplasm. Repressor activity is inhibited in the presence of the DNA mimic protein DMP19, which interacts with NHTF and prevents binding of NHTF to its DNA-binding sites. Its function is as follows. Transcriptional regulator probably involved in the response to nitrogen levels. Down-regulates its own expression as well as the expression of the downstream gene, glnD, which encodes the [Protein-PII] uridylyltransferase, a key enzyme in the nitrogen regulation system. Acts by binding to a specific palindromic DNA sequence (5'-TGTNANTNACA-3') in its 5'-untranslated region. In Neisseria meningitidis serogroup B (strain ATCC BAA-335 / MC58), this protein is Neisseria hypothetical transcription factor.